The sequence spans 55 residues: Hirustasin (55 aa).

Disulfide bonds link Cys-6–Cys-17, Cys-11–Cys-22, Cys-24–Cys-44, Cys-29–Cys-48, and Cys-33–Cys-50. An Antistasin-like domain is found at 24 to 50 (CNEVHCRIRCKYGLKKDENGCEYPCSC).

The protein belongs to the protease inhibitor I15 (antistasin) family.

It localises to the secreted. Acts as an inhibitor of tissue kallikrein, trypsin, chymotrypsin and neutrophil cathepsin G. The sequence is that of Hirustasin from Hirudo medicinalis (Medicinal leech).